Here is a 216-residue protein sequence, read N- to C-terminus: FMN-dependent NADH:quinone oxidoreductase (216 aa).

Residues 15-17 and 139-142 contribute to the FMN site; these read SVS and SRGG.

Belongs to the azoreductase type 1 family. As to quaternary structure, homodimer. FMN is required as a cofactor.

It carries out the reaction 2 a quinone + NADH + H(+) = 2 a 1,4-benzosemiquinone + NAD(+). The catalysed reaction is N,N-dimethyl-1,4-phenylenediamine + anthranilate + 2 NAD(+) = 2-(4-dimethylaminophenyl)diazenylbenzoate + 2 NADH + 2 H(+). In terms of biological role, quinone reductase that provides resistance to thiol-specific stress caused by electrophilic quinones. Also exhibits azoreductase activity. Catalyzes the reductive cleavage of the azo bond in aromatic azo compounds to the corresponding amines. The chain is FMN-dependent NADH:quinone oxidoreductase from Acidovorax ebreus (strain TPSY) (Diaphorobacter sp. (strain TPSY)).